The following is a 93-amino-acid chain: Cobalt transport protein CbiN (93 aa).

The next 2 membrane-spanning stretches (helical) occupy residues Leu-5–Gly-25 and Leu-63–Cys-83.

This sequence belongs to the CbiN family. As to quaternary structure, forms an energy-coupling factor (ECF) transporter complex composed of an ATP-binding protein (A component, CbiO), a transmembrane protein (T component, CbiQ) and 2 possible substrate-capture proteins (S components, CbiM and CbiN) of unknown stoichimetry.

It localises to the cell inner membrane. It participates in cofactor biosynthesis; adenosylcobalamin biosynthesis. Part of the energy-coupling factor (ECF) transporter complex CbiMNOQ involved in cobalt import. The polypeptide is Cobalt transport protein CbiN (Salmonella arizonae (strain ATCC BAA-731 / CDC346-86 / RSK2980)).